Consider the following 244-residue polypeptide: Ribonuclease PH (244 aa).

Phosphate is bound by residues R87 and 125–127 (GTR).

This sequence belongs to the RNase PH family. As to quaternary structure, homohexameric ring arranged as a trimer of dimers.

The catalysed reaction is tRNA(n+1) + phosphate = tRNA(n) + a ribonucleoside 5'-diphosphate. In terms of biological role, phosphorolytic 3'-5' exoribonuclease that plays an important role in tRNA 3'-end maturation. Removes nucleotide residues following the 3'-CCA terminus of tRNAs; can also add nucleotides to the ends of RNA molecules by using nucleoside diphosphates as substrates, but this may not be physiologically important. Probably plays a role in initiation of 16S rRNA degradation (leading to ribosome degradation) during starvation. The chain is Ribonuclease PH from Synechococcus sp. (strain JA-2-3B'a(2-13)) (Cyanobacteria bacterium Yellowstone B-Prime).